We begin with the raw amino-acid sequence, 507 residues long: Histidine ammonia-lyase (507 aa).

Residues Ala141–Gly143 constitute a cross-link (5-imidazolinone (Ala-Gly)). 2,3-didehydroalanine (Ser) is present on Ser142.

It belongs to the PAL/histidase family. In terms of processing, contains an active site 4-methylidene-imidazol-5-one (MIO), which is formed autocatalytically by cyclization and dehydration of residues Ala-Ser-Gly.

Its subcellular location is the cytoplasm. The enzyme catalyses L-histidine = trans-urocanate + NH4(+). Its pathway is amino-acid degradation; L-histidine degradation into L-glutamate; N-formimidoyl-L-glutamate from L-histidine: step 1/3. The sequence is that of Histidine ammonia-lyase from Burkholderia mallei (strain NCTC 10247).